A 195-amino-acid chain; its full sequence is Interferon tau-1 (195 aa).

Positions 1-23 (MAFVLSLLMALVLVSYGPGGSLG) are cleaved as a signal peptide. Intrachain disulfides connect C24–C122 and C52–C162.

The protein belongs to the alpha/beta interferon family. IFN-alphaII subfamily. Constitutively and exclusively expressed in the mononuclear cells of the extraembryonic trophectoderm.

The protein resides in the secreted. Paracrine hormone primarily responsible for maternal recognition of pregnancy. Interacts with endometrial receptors, probably type I interferon receptors, and blocks estrogen receptor expression, preventing the estrogen-induced increase in oxytocin receptor expression in the endometrium. This results in the suppression of the pulsatile endometrial release of the luteolytic hormone prostaglandin F2-alpha, hindering the regression of the corpus luteum (luteolysis) and therefore a return to ovarian cyclicity. This, and a possible direct effect of IFN-tau on prostaglandin synthesis, leads in turn to continued ovarian progesterone secretion, which stimulates the secretion by the endometrium of the nutrients required for the growth of the conceptus. In summary, displays particularly high antiviral and antiproliferative potency concurrently with particular weak cytotoxicity, high antiluteolytic activity and immunomodulatory properties. In contrast with other IFNs, IFN-tau is not virally inducible. The polypeptide is Interferon tau-1 (IFNT1) (Ovis aries (Sheep)).